The sequence spans 109 residues: B melanoma antigen 2 (109 aa).

The N-terminal stretch at 1-17 is a signal peptide; it reads MAAGVVFLALSAQLLQA.

Belongs to the BAGE family. As to expression, not expressed in normal tissues except in testis. Expressed in 22% of melanomas, in bladder and lung carcinomas.

It localises to the secreted. Its function is as follows. Unknown. Candidate gene encoding tumor antigens. This is B melanoma antigen 2 (BAGE2) from Homo sapiens (Human).